The chain runs to 315 residues: 4-hydroxy-3-methylbut-2-enyl diphosphate reductase (315 aa).

Residue Cys12 coordinates [4Fe-4S] cluster. (2E)-4-hydroxy-3-methylbut-2-enyl diphosphate contacts are provided by His41 and His74. Residues His41 and His74 each coordinate dimethylallyl diphosphate. Residues His41 and His74 each coordinate isopentenyl diphosphate. Cys96 lines the [4Fe-4S] cluster pocket. His124 lines the (2E)-4-hydroxy-3-methylbut-2-enyl diphosphate pocket. His124 is a dimethylallyl diphosphate binding site. His124 contributes to the isopentenyl diphosphate binding site. Residue Glu126 is the Proton donor of the active site. A (2E)-4-hydroxy-3-methylbut-2-enyl diphosphate-binding site is contributed by Thr168. Residue Cys198 coordinates [4Fe-4S] cluster. (2E)-4-hydroxy-3-methylbut-2-enyl diphosphate contacts are provided by Ser226, Ser227, Asn228, and Ser270. Dimethylallyl diphosphate is bound by residues Ser226, Ser227, Asn228, and Ser270. Positions 226, 227, 228, and 270 each coordinate isopentenyl diphosphate.

This sequence belongs to the IspH family. [4Fe-4S] cluster is required as a cofactor.

The enzyme catalyses isopentenyl diphosphate + 2 oxidized [2Fe-2S]-[ferredoxin] + H2O = (2E)-4-hydroxy-3-methylbut-2-enyl diphosphate + 2 reduced [2Fe-2S]-[ferredoxin] + 2 H(+). The catalysed reaction is dimethylallyl diphosphate + 2 oxidized [2Fe-2S]-[ferredoxin] + H2O = (2E)-4-hydroxy-3-methylbut-2-enyl diphosphate + 2 reduced [2Fe-2S]-[ferredoxin] + 2 H(+). Its pathway is isoprenoid biosynthesis; dimethylallyl diphosphate biosynthesis; dimethylallyl diphosphate from (2E)-4-hydroxy-3-methylbutenyl diphosphate: step 1/1. The protein operates within isoprenoid biosynthesis; isopentenyl diphosphate biosynthesis via DXP pathway; isopentenyl diphosphate from 1-deoxy-D-xylulose 5-phosphate: step 6/6. Its function is as follows. Catalyzes the conversion of 1-hydroxy-2-methyl-2-(E)-butenyl 4-diphosphate (HMBPP) into a mixture of isopentenyl diphosphate (IPP) and dimethylallyl diphosphate (DMAPP). Acts in the terminal step of the DOXP/MEP pathway for isoprenoid precursor biosynthesis. In Pseudomonas savastanoi pv. phaseolicola (strain 1448A / Race 6) (Pseudomonas syringae pv. phaseolicola (strain 1448A / Race 6)), this protein is 4-hydroxy-3-methylbut-2-enyl diphosphate reductase.